A 953-amino-acid polypeptide reads, in one-letter code: Kinesin-like protein KIF23 (953 aa).

The short motif at 7–11 is the Nuclear localization signal element; it reads KTVRK. The 412-residue stretch at 25-436 folds into the Kinesin motor domain; the sequence is PVGVYCRVRP…MRFAEVTQEV (412 aa). An ATP-binding site is contributed by 112–119; sequence GVTGSGKT. A phosphoserine mark is found at S155 and S160. A coiled-coil region spans residues 542 to 618; it reads QEKLNEREKV…RRLEARLQGM (77 aa). Glycyl lysine isopeptide (Lys-Gly) (interchain with G-Cter in SUMO2) cross-links involve residues K572 and K587. Residue S606 is modified to Phosphoserine. Residues K625, K648, K663, and K666 each participate in a glycyl lysine isopeptide (Lys-Gly) (interchain with G-Cter in SUMO2) cross-link. The interval 658 to 695 is disordered; sequence IVTEPKPEKPERPSRERDREKIIPRSVSPSPLPLSSNN. Over residues 662 to 680 the composition is skewed to basic and acidic residues; the sequence is PKPEKPERPSRERDREKII. Low complexity predominate over residues 681 to 693; sequence PRSVSPSPLPLSS. Phosphoserine occurs at positions 683 and 685. T739 is modified (phosphothreonine). At S807 the chain carries Phosphoserine. Glycyl lysine isopeptide (Lys-Gly) (interchain with G-Cter in SUMO2) cross-links involve residues K816 and K847. S860 carries the phosphoserine modification. Glycyl lysine isopeptide (Lys-Gly) (interchain with G-Cter in SUMO2) cross-links involve residues K867, K870, and K892. 2 disordered regions span residues 894–921 and 934–953; these read ELPTGSRKRRSSTLAPAQPDGTESEWTD and AGSQLGPGYQHHAQPKRKKP. Phosphoserine is present on S904. The residue at position 920 (T920) is a Phosphothreonine. K949 is covalently cross-linked (Glycyl lysine isopeptide (Lys-Gly) (interchain with G-Cter in SUMO2)).

It belongs to the TRAFAC class myosin-kinesin ATPase superfamily. Kinesin family. In terms of assembly, heterotetramer of two molecules each of RACGAP1 and KIF23. Found in the centralspindlin complex. Interacts with RACGAP1; the interaction is direct. Interacts with ECT2 and PRC1. Interacts with ANXA11 during cytokinesis. Interacts with BIRC6/bruce and USP8/UBPY. Interacts with ARF6, forming heterodimers and heterotetramers. In terms of processing, ubiquitinated. Deubiquitinated by USP8/UBPY. As to expression, detected in testis and ovary from newborn mice (at protein level). Detected in brain, spinal cord and small intestine.

It is found in the nucleus. The protein resides in the cytoplasm. Its subcellular location is the cytoskeleton. The protein localises to the spindle. It localises to the midbody. It is found in the midbody ring. Functionally, component of the centralspindlin complex that serves as a microtubule-dependent and Rho-mediated signaling required for the myosin contractile ring formation during the cell cycle cytokinesis. Essential for cytokinesis in Rho-mediated signaling. Required for the localization of ECT2 to the central spindle. Plus-end-directed motor enzyme that moves antiparallel microtubules in vitro. This chain is Kinesin-like protein KIF23 (Kif23), found in Mus musculus (Mouse).